The chain runs to 319 residues: Beta-ketoacyl-[acyl-carrier-protein] synthase III (319 aa).

Active-site residues include Cys113 and His246. The ACP-binding stretch occupies residues Gln247–Arg251. Residue Asn276 is part of the active site.

Belongs to the thiolase-like superfamily. FabH family. As to quaternary structure, homodimer.

It is found in the cytoplasm. It carries out the reaction malonyl-[ACP] + acetyl-CoA + H(+) = 3-oxobutanoyl-[ACP] + CO2 + CoA. The protein operates within lipid metabolism; fatty acid biosynthesis. Its function is as follows. Catalyzes the condensation reaction of fatty acid synthesis by the addition to an acyl acceptor of two carbons from malonyl-ACP. Catalyzes the first condensation reaction which initiates fatty acid synthesis and may therefore play a role in governing the total rate of fatty acid production. Possesses both acetoacetyl-ACP synthase and acetyl transacylase activities. Its substrate specificity determines the biosynthesis of branched-chain and/or straight-chain of fatty acids. The protein is Beta-ketoacyl-[acyl-carrier-protein] synthase III of Rhizorhabdus wittichii (strain DSM 6014 / CCUG 31198 / JCM 15750 / NBRC 105917 / EY 4224 / RW1) (Sphingomonas wittichii).